A 162-amino-acid polypeptide reads, in one-letter code: Large ribosomal subunit protein uL10 (162 aa).

It belongs to the universal ribosomal protein uL10 family. Part of the ribosomal stalk of the 50S ribosomal subunit. The N-terminus interacts with L11 and the large rRNA to form the base of the stalk. The C-terminus forms an elongated spine to which L12 dimers bind in a sequential fashion forming a multimeric L10(L12)X complex.

In terms of biological role, forms part of the ribosomal stalk, playing a central role in the interaction of the ribosome with GTP-bound translation factors. The protein is Large ribosomal subunit protein uL10 of Acholeplasma laidlawii (strain PG-8A).